Here is a 749-residue protein sequence, read N- to C-terminus: Myosin-binding protein 2 (749 aa).

The chain crosses the membrane as a helical span at residues 17-37 (ITLILVYAFLEWSLIFFILLN). Residues 164–184 (NLNDSQEETEEKKVPQSHEKL) are disordered. The span at 173–184 (EEKKVPQSHEKL) shows a compositional bias: basic and acidic residues. One can recognise a GTD-binding domain in the interval 411–509 (LTVDKLKFEL…ELEKELEVYR (99 aa)). Residues 589-621 (ERLSILGRLKFLEEKLTDLNNEEDDEEEAKTFE) adopt a coiled-coil conformation. The interval 608–640 (NNEEDDEEEAKTFESNGSINGNEHIHGKETNGK) is disordered. Residues 630 to 639 (EHIHGKETNG) show a composition bias toward basic and acidic residues. The stretch at 676 to 710 (DSEKGENVTIEEEVDELYERLEALEADREFLRHCV) forms a coiled coil.

Interacts with myosin XI-K and XI-1. Expressed in leaf epidermal cells, roots and root hairs.

Its subcellular location is the endomembrane system. Its function is as follows. Membrane-anchored myosin receptors that define a distinct, plant-specific transport vesicle compartment. This chain is Myosin-binding protein 2, found in Arabidopsis thaliana (Mouse-ear cress).